The primary structure comprises 250 residues: 5-oxoprolinase subunit A (250 aa).

The protein belongs to the LamB/PxpA family. As to quaternary structure, forms a complex composed of PxpA, PxpB and PxpC.

The catalysed reaction is 5-oxo-L-proline + ATP + 2 H2O = L-glutamate + ADP + phosphate + H(+). In terms of biological role, catalyzes the cleavage of 5-oxoproline to form L-glutamate coupled to the hydrolysis of ATP to ADP and inorganic phosphate. This chain is 5-oxoprolinase subunit A, found in Nocardia farcinica (strain IFM 10152).